Consider the following 770-residue polypeptide: Transducin-like enhancer protein 1 (770 aa).

The q domain stretch occupies residues 1–131 (MFPQSRHPTP…IIGQQQLQAQ (131 aa)). Disordered stretches follow at residues 128–157 (LQAQHLSHGHGPPVPLTPHPSGLQPPGIPP) and 176–348 (HLAI…PAID). Positions 132–199 (HLSHGHGPPV…HHRDREPGTS (68 aa)) are GP domain. Composition is skewed to basic and acidic residues over residues 178-196 (AIKDDKKHHDAEHHRDREP) and 209-246 (RGTDKRRNGPEFSNDIKKRKVDDKDSSHYDSDGDKSDD). The segment at 200-268 (NSLLVPDSLR…SPRASPAHSP (69 aa)) is ccN domain. The Nuclear localization signal signature appears at 225–228 (KKRK). Ser-239 carries the phosphoserine modification. Low complexity predominate over residues 257-266 (PSSPRASPAH). Residues Ser-259, Ser-263, and Ser-267 each carry the phosphoserine; by CDK1 modification. A compositionally biased stretch (basic and acidic residues) spans 267–283 (SPRENGIDKNRLLKKDA). Positions 269-450 (RENGIDKNRL…GGKPAYSFHV (182 aa)) are SP domain. Positions 284-298 (SSSPASTASSASSTS) are enriched in low complexity. At Ser-286 the chain carries Phosphoserine. Positions 300–310 (KSKEMSLHEKA) are enriched in basic and acidic residues. WD repeat units lie at residues 470–501 (GIPRHARQINTLNHGEVVCAVTISNPTRHVYT), 528–558 (NRDNYIRSCKLLPDGCTLIVGGEASTLSIWD), 572–602 (SSAPACYALAISPDSKVCFSCCSDGNIAVWD), 614–644 (GHTDGASCIDISNDGTKLWTGGLDNTVRSWD), 696–726 (LHESCVLSLKFAYCGKWFVSTGKDNLLNAWR), and 737–767 (KESSSVLSCDISVDDKYIVTGSGDKKATVYE).

It belongs to the WD repeat Groucho/TLE family. As to quaternary structure, homooligomer and heterooligomer with other family members. Binds RUNX1, RUNX3, FOXA2, KDM6A, UTY, histone H3, HESX1, ESRRG and the NF-kappa-B subunit RELA. Interacts with HES1 (via WRPW motif). Binds TCF7, LEF1, TCF7L1 and TCF7L2. Interacts with SIX3. Interacts with EFNB1. Interacts with TLE4. Interacts with FOXG1/BF-1; the interaction is inhibited by TLE6/GRG6. In terms of processing, phosphorylated, probably by CDK1. The degree of phosphorylation varies throughout the cell cycle, and is highest at the G2/M transition. Becomes hyperphosphorylated in response to cell differentiation and interaction with HES1 or RUNX1. Ubiquitinated by XIAP/BIRC4. As to expression, in all tissues examined, mostly in brain, liver and muscle.

The protein resides in the nucleus. Transcriptional corepressor that binds to a number of transcription factors. Inhibits NF-kappa-B-regulated gene expression. Inhibits the transcriptional activation mediated by FOXA2, and by CTNNB1 and TCF family members in Wnt signaling. Enhances FOXG1/BF-1- and HES1-mediated transcriptional repression. The effects of full-length TLE family members may be modulated by association with dominant-negative AES. Unusual function as coactivator for ESRRG. The polypeptide is Transducin-like enhancer protein 1 (TLE1) (Homo sapiens (Human)).